The sequence spans 357 residues: Glutamine synthetase root isozyme A (357 aa).

One can recognise a GS beta-grasp domain in the interval 19-99; the sequence is IIAEYIWVGG…VICDVYTPAG (81 aa). Positions 106–357 constitute a GS catalytic domain; that stretch reads KRYNAAKIFS…AETTILWKKP (252 aa).

It belongs to the glutamine synthetase family. As to quaternary structure, homooctamer.

The protein resides in the cytoplasm. The enzyme catalyses L-glutamate + NH4(+) + ATP = L-glutamine + ADP + phosphate + H(+). This is Glutamine synthetase root isozyme A (GS3A) from Pisum sativum (Garden pea).